Reading from the N-terminus, the 403-residue chain is Aspartic protease PEP1 (403 aa).

The N-terminal stretch at 1–20 (MVQISQIGAVLAVCSTLTVA) is a signal peptide. The propeptide at 21–67 (APTKGKARFNVPQVAVPMKAVHHPAVAYARALHKFGMKVPKAVSDAA) is activation peptide. The region spanning 82-400 (YVTQVTVGQG…DTEGPRIGFA (319 aa)) is the Peptidase A1 domain. D98 is an active-site residue. 2 N-linked (GlcNAc...) asparagine glycosylation sites follow: N159 and N270. D293 is a catalytic residue. An intrachain disulfide couples C329 to C361.

Belongs to the peptidase A1 family.

The protein localises to the secreted. The catalysed reaction is Hydrolysis of proteins with broad specificity. Generally favors hydrophobic residues in P1 and P1', but also accepts Lys in P1, which leads to activation of trypsinogen. Does not clot milk.. Its function is as follows. Secreted aspartic endopeptidase that allows assimilation of proteinaceous substrates. Can catalyze hydrolysis of the major structural proteins of basement membrane, elastin, collagen, and laminin. Thought to play a significant role in virulence. The protein is Aspartic protease PEP1 (PEP1) of Arthroderma benhamiae (strain ATCC MYA-4681 / CBS 112371) (Trichophyton mentagrophytes).